The following is a 122-amino-acid chain: Large ribosomal subunit protein uL14 (122 aa).

The protein belongs to the universal ribosomal protein uL14 family. As to quaternary structure, part of the 50S ribosomal subunit. Forms a cluster with proteins L3 and L19. In the 70S ribosome, L14 and L19 interact and together make contacts with the 16S rRNA in bridges B5 and B8.

In terms of biological role, binds to 23S rRNA. Forms part of two intersubunit bridges in the 70S ribosome. This is Large ribosomal subunit protein uL14 from Pseudoalteromonas translucida (strain TAC 125).